A 672-amino-acid polypeptide reads, in one-letter code: MTSITHAELGWNEVGTPVSDQFDDVYFSNVNGLEETRYVFLKQNLIPERWQEFDRRRFVIGETGFGTGLNFLAVWQAFNDFRRANPDATLKELHFISFEKFPLSKQDLIKAHQAWPELAELAEKLHRHYPPAVPECHRIVLDNGAVTLDLWLGDIKDCLPSVPYGEEGIIDTWFLDGFAPSKNPEMWNQDLFNGMAKLARSECRVATFTSAGFVRRGLIEAGFAMKKVKGFGTKREMIAGCMETRQPQSRHAPYFNRTSASHLDSIAIIGGGIASAALAKALVQRGQKVTLYCKHAQAAEGASGNRQGAVYPLLNGSHDGVSRVFAPAFLFTRQFVEQAAQALTFDHDWCGVTQLMWDEKSTNKLDKMLSGNFAPELIQKLSAEETAAKIGLPIDMASVHYPLGGWLCPAELTQALFAQLDTLDNFTAKFEQSVEQLIWDERSQQWQVHTQGQHDTYSAVVIANGHEFQTFSQTADIPLGQVKGQVSHAPATETLSKLKSVLCYDGYMTPVNPNNQHLCIGASYDRRHLDTEFDVNAQQENAEKLTQCVPNQAWAKEVDTSGNLSRQGIRCVSRDHLPFVGNVGDFSAIKRQYADLPHTQAEEIEVISQFPNLFCLLGLGSRGLSSAPLMAELLASQICNDPLPLPVDVLEELHPSRMWVRKLRKGKAITEL.

Residues 1–243 (MTSITHAELG…KREMIAGCME (243 aa)) are tRNA (mnm(5)s(2)U34)-methyltransferase. The segment at 269-672 (IGGGIASAAL…LRKGKAITEL (404 aa)) is FAD-dependent cmnm(5)s(2)U34 oxidoreductase.

This sequence in the N-terminal section; belongs to the methyltransferase superfamily. tRNA (mnm(5)s(2)U34)-methyltransferase family. In the C-terminal section; belongs to the DAO family. FAD serves as cofactor.

It localises to the cytoplasm. The catalysed reaction is 5-aminomethyl-2-thiouridine(34) in tRNA + S-adenosyl-L-methionine = 5-methylaminomethyl-2-thiouridine(34) in tRNA + S-adenosyl-L-homocysteine + H(+). In terms of biological role, catalyzes the last two steps in the biosynthesis of 5-methylaminomethyl-2-thiouridine (mnm(5)s(2)U) at the wobble position (U34) in tRNA. Catalyzes the FAD-dependent demodification of cmnm(5)s(2)U34 to nm(5)s(2)U34, followed by the transfer of a methyl group from S-adenosyl-L-methionine to nm(5)s(2)U34, to form mnm(5)s(2)U34. The protein is tRNA 5-methylaminomethyl-2-thiouridine biosynthesis bifunctional protein MnmC of Vibrio vulnificus (strain YJ016).